A 313-amino-acid chain; its full sequence is Formimidoylglutamase (313 aa).

Mn(2+)-binding residues include His130, Asp155, His157, Asp159, Asp241, and Asp243.

This sequence belongs to the arginase family. Requires Mn(2+) as cofactor.

The catalysed reaction is N-formimidoyl-L-glutamate + H2O = formamide + L-glutamate. It functions in the pathway amino-acid degradation; L-histidine degradation into L-glutamate; L-glutamate from N-formimidoyl-L-glutamate (hydrolase route): step 1/1. Catalyzes the conversion of N-formimidoyl-L-glutamate to L-glutamate and formamide. The polypeptide is Formimidoylglutamase (Salmonella choleraesuis (strain SC-B67)).